The sequence spans 132 residues: Fatty acid-binding protein, adipocyte (132 aa).

Cysteine 2 bears the N-acetylcysteine mark. Phosphoserine is present on serine 13. Tyrosine 20 is subject to Phosphotyrosine; by Tyr-kinases. A Nuclear localization signal motif is present at residues 22-32 (KEVGVGFATRK). An a fatty acid-binding site is contributed by 127-129 (RVY).

It belongs to the calycin superfamily. Fatty-acid binding protein (FABP) family. In terms of assembly, monomer. Homodimer. Interacts with PPARG.

The protein localises to the cytoplasm. It localises to the nucleus. In terms of biological role, lipid transport protein in adipocytes. Binds both long chain fatty acids and retinoic acid. Delivers long-chain fatty acids and retinoic acid to their cognate receptors in the nucleus. The chain is Fatty acid-binding protein, adipocyte (Fabp4) from Rattus norvegicus (Rat).